Consider the following 188-residue polypeptide: Small ribosomal subunit protein bS16 (188 aa).

Residues 155-188 (IAAASATEEAATEEVAEAAEEAPAAEENNETTEA) are disordered. Positions 164 to 188 (AATEEVAEAAEEAPAAEENNETTEA) are enriched in acidic residues.

Belongs to the bacterial ribosomal protein bS16 family.

This is Small ribosomal subunit protein bS16 from Flavobacterium johnsoniae (strain ATCC 17061 / DSM 2064 / JCM 8514 / BCRC 14874 / CCUG 350202 / NBRC 14942 / NCIMB 11054 / UW101) (Cytophaga johnsonae).